The primary structure comprises 283 residues: Bifunctional protein FolD (283 aa).

NADP(+) is bound by residues G165–S167 and S190.

This sequence belongs to the tetrahydrofolate dehydrogenase/cyclohydrolase family. Homodimer.

It catalyses the reaction (6R)-5,10-methylene-5,6,7,8-tetrahydrofolate + NADP(+) = (6R)-5,10-methenyltetrahydrofolate + NADPH. The enzyme catalyses (6R)-5,10-methenyltetrahydrofolate + H2O = (6R)-10-formyltetrahydrofolate + H(+). The protein operates within one-carbon metabolism; tetrahydrofolate interconversion. Its function is as follows. Catalyzes the oxidation of 5,10-methylenetetrahydrofolate to 5,10-methenyltetrahydrofolate and then the hydrolysis of 5,10-methenyltetrahydrofolate to 10-formyltetrahydrofolate. The sequence is that of Bifunctional protein FolD from Cupriavidus taiwanensis (strain DSM 17343 / BCRC 17206 / CCUG 44338 / CIP 107171 / LMG 19424 / R1) (Ralstonia taiwanensis (strain LMG 19424)).